Here is a 193-residue protein sequence, read N- to C-terminus: Zinc finger CCHC domain-containing protein 17 (193 aa).

The region spanning 1-40 is the S1 motif; truncated domain; the sequence is MSSCRVDKPSEIVDVGDKVWVKLIGREMKNDRIKVSLSMK. Serine 66 carries the phosphoserine modification. A CCHC-type zinc finger spans residues 83–100; the sequence is TTCKKCGCKGHFAKDCFM. Position 96 is an N6-acetyllysine (lysine 96). The tract at residues 113-193 is disordered; the sequence is EEEEKEEAKS…KKKHKKKHKE (81 aa). Over residues 118-129 the composition is skewed to basic and acidic residues; sequence EEAKSAEFEKPV. A compositionally biased stretch (basic residues) spans 134-150; sequence PSRKRKKEKKKKKHRDR. The residue at position 135 (serine 135) is a Phosphoserine. Residues 163 to 177 are compositionally biased toward basic and acidic residues; that stretch reads DTGKRARHTSKDSKA. The segment covering 178 to 193 has biased composition (basic residues); sequence AKKKKKKKKHKKKHKE.

As to quaternary structure, may interact with PNN. May associate with the 60 S ribosomal subunit.

The protein localises to the nucleus. The protein resides in the nucleolus. The protein is Zinc finger CCHC domain-containing protein 17 (ZCCHC17) of Macaca fascicularis (Crab-eating macaque).